The primary structure comprises 86 residues: UPF0297 protein LSL_1110 (86 aa).

Belongs to the UPF0297 family.

In Ligilactobacillus salivarius (strain UCC118) (Lactobacillus salivarius), this protein is UPF0297 protein LSL_1110.